Consider the following 510-residue polypeptide: Sucrose transport protein SUC4 (510 aa).

The tract at residues 1-34 (MATSDQDRRHRVTRNRPPIARPSTSSSRPVVSPP) is disordered. Over 1–45 (MATSDQDRRHRVTRNRPPIARPSTSSSRPVVSPPRSKVSKRVLLR) the chain is Cytoplasmic. Over residues 21–34 (RPSTSSSRPVVSPP) the composition is skewed to low complexity. Ser23 carries the post-translational modification Phosphoserine. A helical membrane pass occupies residues 46-66 (VASVACGIQFGWALQLSLLTP). Residues 67-71 (YVQEL) lie on the Extracellular side of the membrane. The chain crosses the membrane as a helical span at residues 72–92 (GIPHAWASVIWLCGPLSGLFV). The Cytoplasmic portion of the chain corresponds to 93-111 (QPLVGHSSDRCTSKYGRRR). The chain crosses the membrane as a helical span at residues 112-132 (PFIVAGAVAISISVMVIGHAA). Over 133–148 (DIGWAFGDREGKIKPR) the chain is Extracellular. A helical transmembrane segment spans residues 149 to 169 (AIVAFVLGFWILDVANNMTQG). Topologically, residues 170–187 (PCRALLADLTENDNRRTR) are cytoplasmic. Residues 188–208 (VANGYFSLFMAVGNVLGYATG) traverse the membrane as a helical segment. The Extracellular portion of the chain corresponds to 209–233 (SYNGWYKIFTFTKTVACNVECANLK). Residues 234-254 (SAFYIDVVFIAITTILSVSAA) traverse the membrane as a helical segment. At 255 to 291 (HEVPLASLASEAHGQTSGTDEAFLSEIFGTFRYFPGN) the chain is on the cytoplasmic side. The helical transmembrane segment at 292-312 (VWIILLVTALTWIGWFPFILF) threads the bilayer. Residues 313–335 (DTDWMGREIYGGEPNIGTSYSAG) are Extracellular-facing. A helical transmembrane segment spans residues 336-356 (VSMGALGLMLNSVFLGITSVL). Topologically, residues 357–365 (MEKLCRKWG) are cytoplasmic. Residues 366–386 (AGFVWGISNILMAICFLGMII) form a helical membrane-spanning segment. The Extracellular segment spans residues 387–402 (TSFVASHLGYIGHEQP). Residues 403–423 (PASIVFAAVLIFTILGIPLAI) traverse the membrane as a helical segment. Topologically, residues 424–443 (TYSVPYALISIRIESLGLGQ) are cytoplasmic. Residues 444–464 (GLSLGVLNLAIVIPQVIVSVG) form a helical membrane-spanning segment. The Extracellular segment spans residues 465 to 477 (SGPWDQLFGGGNS). A helical transmembrane segment spans residues 478-498 (PALAVGAATGFIGGIVAILAL). The Cytoplasmic portion of the chain corresponds to 499–510 (PRTRIQKPIPLP).

Belongs to the glycoside-pentoside-hexuronide (GPH) cation symporter transporter (TC 2.A.2.4) family. In terms of assembly, homodimer. Interacts with SUC2 and SUC3. As to expression, expressed in sink tissues, mostly in minor veins of sink leaves. Localized in companion cells.

It is found in the cell membrane. It carries out the reaction sucrose(out) + H(+)(out) = sucrose(in) + H(+)(in). It participates in glycan biosynthesis; sucrose metabolism. Functionally, responsible for the transport of sucrose into the cell, with the concomitant uptake of protons (symport system). Can also transport maltose at a lesser rate. May also transport biotin. The sequence is that of Sucrose transport protein SUC4 from Arabidopsis thaliana (Mouse-ear cress).